Reading from the N-terminus, the 401-residue chain is Imidazolonepropionase (401 aa).

Residues His-66 and His-68 each contribute to the Fe(3+) site. 2 residues coordinate Zn(2+): His-66 and His-68. The 4-imidazolone-5-propanoate site is built by Arg-75, Tyr-138, and His-171. Position 138 (Tyr-138) interacts with N-formimidoyl-L-glutamate. Fe(3+) is bound at residue His-236. Zn(2+) is bound at residue His-236. Gln-239 contacts 4-imidazolone-5-propanoate. Fe(3+) is bound at residue Asp-311. Residue Asp-311 participates in Zn(2+) binding. The N-formimidoyl-L-glutamate site is built by Asn-313 and Gly-315. Thr-316 provides a ligand contact to 4-imidazolone-5-propanoate.

Belongs to the metallo-dependent hydrolases superfamily. HutI family. Zn(2+) is required as a cofactor. It depends on Fe(3+) as a cofactor.

It is found in the cytoplasm. It catalyses the reaction 4-imidazolone-5-propanoate + H2O = N-formimidoyl-L-glutamate. The protein operates within amino-acid degradation; L-histidine degradation into L-glutamate; N-formimidoyl-L-glutamate from L-histidine: step 3/3. Functionally, catalyzes the hydrolytic cleavage of the carbon-nitrogen bond in imidazolone-5-propanoate to yield N-formimidoyl-L-glutamate. It is the third step in the universal histidine degradation pathway. This Pseudomonas syringae pv. tomato (strain ATCC BAA-871 / DC3000) protein is Imidazolonepropionase.